The primary structure comprises 264 residues: Transformer-2 sex-determining protein (264 aa).

A disordered region spans residues 1–96 (MDREPLSSGR…HKSREHPQAS (96 aa)). The segment covering 13–22 (CSARYKHKRS) has biased composition (basic residues). A compositionally biased stretch (low complexity) spans 23–33 (ASSSSAGTTSS). Serine 40 carries the phosphoserine modification. Residues 47 to 61 (SRRHQRSSSRRRSRS) show a composition bias toward basic residues. The span at 71-85 (EPRHRSGRSSRDRER) shows a compositional bias: basic and acidic residues. Residues 97 to 175 (RCIGVFGLNT…RRIRVDFSIT (79 aa)) enclose the RRM domain. A linker region spans residues 176–196 (QRAHTPTPGVYLGRQPRGKAP). The tract at residues 179-264 (HTPTPGVYLG…PQLRRTSSRY (86 aa)) is disordered. Position 180 is a phosphothreonine (threonine 180). Residues 191-206 (PRGKAPRSFSPRRGRR) show a composition bias toward basic residues. Over residues 207-234 (VYHDRSASPYDNYRDRYDYRNDRYDRNL) the composition is skewed to basic and acidic residues. 2 positions are modified to phosphoserine: serine 212 and serine 214. Residues 235–250 (RRSPSRNRYTRNRSYS) show a composition bias toward basic residues. Serine 254 is subject to Phosphoserine.

It belongs to the splicing factor SR family. Extensively phosphorylated on serine residues in the RS domain. As to expression, isoform Tmaj and isoform Tmin are expressed in males and females. Isoform msTmaj and isoform msTmin are present only in male germ cells.

Functionally, required for female sex determination in somatic cells and for spermatogenesis in male germ cells. Positive regulator of female-specific splicing and/or polyadenylation of doublesex (dsx) pre-mRNA. Splicing requires an enhancer complex, dsxRE (dsx repeat element: which contains six copies of a 13-nucleotide repeat and a purine-rich enhancer (PRE)). DsxRE is formed through cooperative interactions between tra, tra2 and the sr proteins, and these interactions require both the repeat sequences and PRE. PRE is required for specific binding of tra2 to the dsxRE. Protein-RNA and protein-protein interactions are involved in tra-2 dependent activation and repression of alternative splicing. Together with tra-2, plays a role in switching fru splicing from the male-specific pattern to the female-specific pattern through activation of the female-specific fru 5'-splice site. This is Transformer-2 sex-determining protein (tra2) from Drosophila melanogaster (Fruit fly).